A 1070-amino-acid chain; its full sequence is Carbamoyl phosphate synthase large chain (1070 aa).

The interval 1–399 (MPKREDIKKV…SLLKAFKSLD (399 aa)) is carboxyphosphate synthetic domain. Arginine 129, arginine 169, glycine 175, glycine 176, glutamate 208, valine 210, glutamate 215, glycine 241, valine 242, histidine 243, glutamine 284, and glutamate 296 together coordinate ATP. The region spanning 133–325 (KETMLRIGEK…IARVTAKIAI (193 aa)) is the ATP-grasp 1 domain. Mg(2+) contacts are provided by glutamine 284, glutamate 296, and asparagine 298. Positions 284, 296, and 298 each coordinate Mn(2+). Residues 400–540 (IDSQLGNKRW…YSTYEDTCET (141 aa)) are oligomerization domain. A carbamoyl phosphate synthetic domain region spans residues 541–931 (NPTDRKKILI…YKAELAADNL (391 aa)). In terms of domain architecture, ATP-grasp 2 spans 672–863 (YVLMQKFGIL…LAKIAARVIA (192 aa)). ATP is bound by residues arginine 708, aspartate 747, leucine 749, glutamate 754, glycine 779, valine 780, histidine 781, serine 782, glutamine 822, and glutamate 834. Mg(2+)-binding residues include glutamine 822, glutamate 834, and asparagine 836. Mn(2+)-binding residues include glutamine 822, glutamate 834, and asparagine 836. Residues 930-1070 (NLLPLTGKVF…INEYHKEMGL (141 aa)) enclose the MGS-like domain. Residues 932 to 1070 (LPLTGKVFLS…INEYHKEMGL (139 aa)) are allosteric domain.

It belongs to the CarB family. Composed of two chains; the small (or glutamine) chain promotes the hydrolysis of glutamine to ammonia, which is used by the large (or ammonia) chain to synthesize carbamoyl phosphate. Tetramer of heterodimers (alpha,beta)4. Mg(2+) is required as a cofactor. It depends on Mn(2+) as a cofactor.

The enzyme catalyses hydrogencarbonate + L-glutamine + 2 ATP + H2O = carbamoyl phosphate + L-glutamate + 2 ADP + phosphate + 2 H(+). It catalyses the reaction hydrogencarbonate + NH4(+) + 2 ATP = carbamoyl phosphate + 2 ADP + phosphate + 2 H(+). The protein operates within amino-acid biosynthesis; L-arginine biosynthesis; carbamoyl phosphate from bicarbonate: step 1/1. Its pathway is pyrimidine metabolism; UMP biosynthesis via de novo pathway; (S)-dihydroorotate from bicarbonate: step 1/3. Its function is as follows. Large subunit of the glutamine-dependent carbamoyl phosphate synthetase (CPSase). CPSase catalyzes the formation of carbamoyl phosphate from the ammonia moiety of glutamine, carbonate, and phosphate donated by ATP, constituting the first step of 2 biosynthetic pathways, one leading to arginine and/or urea and the other to pyrimidine nucleotides. The large subunit (synthetase) binds the substrates ammonia (free or transferred from glutamine from the small subunit), hydrogencarbonate and ATP and carries out an ATP-coupled ligase reaction, activating hydrogencarbonate by forming carboxy phosphate which reacts with ammonia to form carbamoyl phosphate. This chain is Carbamoyl phosphate synthase large chain, found in Methanosarcina acetivorans (strain ATCC 35395 / DSM 2834 / JCM 12185 / C2A).